Here is a 105-residue protein sequence, read N- to C-terminus: Host transcription reprogramming factor 7 (105 aa).

The signal sequence occupies residues methionine 1–alanine 19. A C2H2-type zinc finger spans residues tyrosine 69–histidine 95.

The protein localises to the secreted. Its subcellular location is the host nucleus. In terms of biological role, probable secreted effector that translocates into the nuclei of host cells to reprogram the expression of targeted genes by binding on effector binding elements in rice. This is Host transcription reprogramming factor 7 from Pyricularia oryzae (strain 70-15 / ATCC MYA-4617 / FGSC 8958) (Rice blast fungus).